The primary structure comprises 2541 residues: Talin-1 (2541 aa).

The FERM domain occupies arginine 86 to lysine 403. Threonine 167 carries the phosphothreonine modification. Residues phenylalanine 280–glutamine 435 are interaction with LAYN. 5 positions are modified to phosphoserine: serine 405, serine 425, serine 446, serine 620, and serine 729. Residues arginine 482–isoleucine 655 form a helical bundle R1 region. The segment at glycine 656–lysine 786 is helical bundle R2. The interval alanine 787–lysine 911 is helical bundle R3. Positions leucine 913–alanine 1044 are helical bundle R4. Serine 1021 carries the post-translational modification Phosphoserine. Residues glycine 1046 to glutamine 1206 are helical bundle R5. The residue at position 1116 (tyrosine 1116) is a Phosphotyrosine. Threonine 1142 carries the post-translational modification Phosphothreonine. Serine 1201 and serine 1225 each carry phosphoserine. The helical bundle R6 stretch occupies residues arginine 1207–alanine 1357. Threonine 1263 bears the Phosphothreonine mark. Serine 1323 carries the phosphoserine modification. The interaction with SYNM stretch occupies residues alanine 1327–lysine 1948. Residues proline 1358–asparagine 1453 are helical bundle R7A. The tract at residues glycine 1359–leucine 1659 is interaction with VCL and F-actin. A helical bundle R8 region spans residues leucine 1461–glutamate 1580. Residue lysine 1544 is modified to N6-acetyllysine. The interval phenylalanine 1581–aspartate 1653 is helical bundle R7B. A helical bundle R9 region spans residues alanine 1655–glycine 1822. Residues valine 1823–arginine 1973 form a helical bundle R10 region. Serine 1849 carries the post-translational modification Phosphoserine. Threonine 1855 is subject to Phosphothreonine. A Phosphoserine modification is found at serine 1878. Residues glycine 1974 to threonine 2140 are helical bundle R11. N6-acetyllysine is present on lysine 2031. A Phosphoserine modification is found at serine 2040. An N6-acetyllysine modification is found at lysine 2115. The helical bundle R12 stretch occupies residues lysine 2141–glutamate 2294. Positions threonine 2293–leucine 2533 constitute an I/LWEQ domain. The tract at residues aspartate 2300–glutamate 2482 is helical bundle R13.

In terms of assembly, part of a complex composed of THSD1, PTK2/FAK1, TLN1 and VCL. Interacts with THSD1; this promotes interaction with PTK2/FAK1 and VCL. Binds with high affinity to VCL and with low affinity to integrins. Interacts with APBB1IP; this inhibits VCL binding. Interacts with PTK2/FAK1. Interacts with PIP5K1C and NRAP. Interacts with LAYN. Interacts with SYNM. Interacts with ITGB1; the interaction is prevented by competitive binding of ITGB1BP1. Interacts with SVEP1. Interacts (via R7 domain) with KANK1 or KANK2 (via KN motif); this interaction likely initiates the assembly of cortical microtubule stabilization complexes (CMSCs) at the vicinity of focal adhesions. Interacts with VCL; shows reduced VCL binding compared to isoform 2. Interacts with APBB1IP; shows similar level of binding compared to isoform 2. As to quaternary structure, interacts with VCL; shows enhanced VCL binding compared to isoform 1. Interacts with APBB1IP; shows similar level of binding compared to isoform 1. In terms of assembly, (Microbial infection) Interacts with human cytomegalovirus protein UL135. As to expression, expressed at low to non-detectable levels in many tissues but highly expressed in skin and pancreas with other tissues including kidney cortex, endocervix, testis, pituitary, liver, and spleen also showing robust expression.

It is found in the cell projection. It localises to the ruffle membrane. Its subcellular location is the cytoplasm. The protein resides in the cytoskeleton. The protein localises to the cell surface. It is found in the cell junction. It localises to the focal adhesion. Functionally, high molecular weight cytoskeletal protein concentrated at regions of cell-matrix and cell-cell contacts. Involved in connections of major cytoskeletal structures to the plasma membrane. With KANK1 co-organize the assembly of cortical microtubule stabilizing complexes (CMSCs) positioned to control microtubule-actin crosstalk at focal adhesions (FAs) rims. The chain is Talin-1 (TLN1) from Homo sapiens (Human).